A 260-amino-acid chain; its full sequence is Ubiquinone/menaquinone biosynthesis C-methyltransferase UbiE (260 aa).

S-adenosyl-L-methionine is bound by residues Thr83, Asp104, Asn132 to Ala133, and Ser149.

It belongs to the class I-like SAM-binding methyltransferase superfamily. MenG/UbiE family.

It carries out the reaction a 2-demethylmenaquinol + S-adenosyl-L-methionine = a menaquinol + S-adenosyl-L-homocysteine + H(+). The catalysed reaction is a 2-methoxy-6-(all-trans-polyprenyl)benzene-1,4-diol + S-adenosyl-L-methionine = a 5-methoxy-2-methyl-3-(all-trans-polyprenyl)benzene-1,4-diol + S-adenosyl-L-homocysteine + H(+). The protein operates within quinol/quinone metabolism; menaquinone biosynthesis; menaquinol from 1,4-dihydroxy-2-naphthoate: step 2/2. Its pathway is cofactor biosynthesis; ubiquinone biosynthesis. In terms of biological role, methyltransferase required for the conversion of demethylmenaquinol (DMKH2) to menaquinol (MKH2) and the conversion of 2-polyprenyl-6-methoxy-1,4-benzoquinol (DDMQH2) to 2-polyprenyl-3-methyl-6-methoxy-1,4-benzoquinol (DMQH2). The chain is Ubiquinone/menaquinone biosynthesis C-methyltransferase UbiE from Vibrio cholerae serotype O1 (strain ATCC 39315 / El Tor Inaba N16961).